A 522-amino-acid polypeptide reads, in one-letter code: Maturase K (522 aa).

Belongs to the intron maturase 2 family. MatK subfamily.

The protein resides in the plastid. It localises to the chloroplast. Usually encoded in the trnK tRNA gene intron. Probably assists in splicing its own and other chloroplast group II introns. This is Maturase K from Dianella ensifolia (Flax lily).